We begin with the raw amino-acid sequence, 106 residues long: Small ribosomal subunit protein bS18 (106 aa).

The segment at Met-1–Arg-39 is disordered.

This sequence belongs to the bacterial ribosomal protein bS18 family. In terms of assembly, part of the 30S ribosomal subunit. Forms a tight heterodimer with protein bS6.

Functionally, binds as a heterodimer with protein bS6 to the central domain of the 16S rRNA, where it helps stabilize the platform of the 30S subunit. The chain is Small ribosomal subunit protein bS18 from Sorangium cellulosum (strain So ce56) (Polyangium cellulosum (strain So ce56)).